A 492-amino-acid chain; its full sequence is uncharacterized protein (492 aa).

13 helical membrane-spanning segments follow: residues 67–87 (VAIM…GGWL), 88–108 (ADRV…IMFG), 110–130 (IALA…LIIV), 157–177 (GFSI…LIVG), 185–205 (YHLG…VFAL), 232–252 (IGVI…VLTI), 255–275 (FIDL…IIMF), 294–314 (LFIG…ILAV), 333–353 (WFQS…AWLW), 367–387 (FSIG…PAMQ), 392–412 (LVSP…ELCL), 434–454 (SMWF…AGLF), and 464–484 (GTIG…SPVI).

It belongs to the major facilitator superfamily. Proton-dependent oligopeptide transporter (POT/PTR) (TC 2.A.17) family.

It localises to the cell membrane. This is an uncharacterized protein from Bacillus subtilis (strain 168).